Here is a 412-residue protein sequence, read N- to C-terminus: Tyrosine--tRNA ligase 1 (412 aa).

Y41 serves as a coordination point for L-tyrosine. Positions 46–55 (ATADSLHVGH) match the 'HIGH' region motif. Residues Y174 and Q178 each contribute to the L-tyrosine site. Residues 234–238 (KMGKS) carry the 'KMSKS' region motif. K237 is an ATP binding site. The S4 RNA-binding domain maps to 348 to 411 (LSLTDLLLEH…KKQHLHLRLE (64 aa)).

It belongs to the class-I aminoacyl-tRNA synthetase family. TyrS type 1 subfamily. Homodimer.

Its subcellular location is the cytoplasm. It carries out the reaction tRNA(Tyr) + L-tyrosine + ATP = L-tyrosyl-tRNA(Tyr) + AMP + diphosphate + H(+). Catalyzes the attachment of tyrosine to tRNA(Tyr) in a two-step reaction: tyrosine is first activated by ATP to form Tyr-AMP and then transferred to the acceptor end of tRNA(Tyr). The sequence is that of Tyrosine--tRNA ligase 1 from Pseudomonas aeruginosa (strain ATCC 15692 / DSM 22644 / CIP 104116 / JCM 14847 / LMG 12228 / 1C / PRS 101 / PAO1).